A 1342-amino-acid polypeptide reads, in one-letter code: DNA-directed RNA polymerase subunit beta (1342 aa).

It belongs to the RNA polymerase beta chain family. In terms of assembly, the RNAP catalytic core consists of 2 alpha, 1 beta, 1 beta' and 1 omega subunit. When a sigma factor is associated with the core the holoenzyme is formed, which can initiate transcription.

The enzyme catalyses RNA(n) + a ribonucleoside 5'-triphosphate = RNA(n+1) + diphosphate. DNA-dependent RNA polymerase catalyzes the transcription of DNA into RNA using the four ribonucleoside triphosphates as substrates. This is DNA-directed RNA polymerase subunit beta from Photorhabdus laumondii subsp. laumondii (strain DSM 15139 / CIP 105565 / TT01) (Photorhabdus luminescens subsp. laumondii).